A 699-amino-acid chain; its full sequence is MAREYKIEDYRNFGIMAHIDAGKTTTTERILYYTGKSHKIGEVHDGAATMDWMEQEQERGITITSAATTTFWKGRDGKMRRFNIIDTPGHVDFTIEVERSLRVLDGAIALLDANAGVEPQTETVWRQAEKYNVPRMIFCNKMDKTGADFYRSVEMIKTRLGATAVVMQLPIGAETEFKGVIDLVEMNALIWRDESLGAQWDVVEIPEDMKAKAEEYREKLIETVVDIDEAATEAYLEGILPDNEQIRALVRRGTIDVKFHPMFCGTAFKNKGVQPLLDAVVDYLPSPMDIPAIKGIDFKTEAEIERHADDSEPLSMLAFKIMNDPFVGSLTFARIYSGKLEKGASVINTVKDKRERVGRMLQMHSNSREDIEEAFAGDIVALAGLKETTTGDTLCDPLKPVILERMEFPEPVIQIAIEPKTKGDQEKMGLALNRLAAEDPSFRVKTDQESGQTIIAGMGELHLDIIVDRMRREFKVEATVGAPQVAYRETITRTHEEDYTHKKQSGGTGQFARVKIVFEPNPEGDEFKFESKIVGGSVPKEYIPGVQKGIESVLSSGPLAGFPMLGVKATLIDGAFHDVDSSVLAFEIASRACFREAAKKAGAQLLEPMMKVEVVTPEDYVGDVIGDLNSRRGQIQGQESRGIAVVINANVPLANMFKYVDNLRSMSQGRAQYTMTFDHYSPVPSNVATEIQAKYSGQK.

Residues Glu-8 to Met-288 form the tr-type G domain. GTP contacts are provided by residues Ala-17 to Thr-24, Asp-86 to His-90, and Asn-140 to Asp-143.

It belongs to the TRAFAC class translation factor GTPase superfamily. Classic translation factor GTPase family. EF-G/EF-2 subfamily.

The protein localises to the cytoplasm. In terms of biological role, catalyzes the GTP-dependent ribosomal translocation step during translation elongation. During this step, the ribosome changes from the pre-translocational (PRE) to the post-translocational (POST) state as the newly formed A-site-bound peptidyl-tRNA and P-site-bound deacylated tRNA move to the P and E sites, respectively. Catalyzes the coordinated movement of the two tRNA molecules, the mRNA and conformational changes in the ribosome. In Rhizobium johnstonii (strain DSM 114642 / LMG 32736 / 3841) (Rhizobium leguminosarum bv. viciae), this protein is Elongation factor G.